We begin with the raw amino-acid sequence, 120 residues long: MASIIFTAKDIFDQDFKREVRGYSKSEVDEFLDDIIKDYETYAALVKELREENRRLKEELAAKPVEKAPVQPTQPVQSTQATQSTVESFSQMTSATNFDILKRLNRLEKEVFGKQILDRE.

Residues 32–68 are a coiled coil; sequence LDDIIKDYETYAALVKELREENRRLKEELAAKPVEKA. A disordered region spans residues 63 to 88; that stretch reads KPVEKAPVQPTQPVQSTQATQSTVES. The segment covering 68–86 has biased composition (low complexity); the sequence is APVQPTQPVQSTQATQSTV.

Belongs to the GpsB family. In terms of assembly, forms polymers through the coiled coil domains. Interacts with PBP1, MreC and EzrA.

The protein localises to the cytoplasm. In terms of biological role, divisome component that associates with the complex late in its assembly, after the Z-ring is formed, and is dependent on DivIC and PBP2B for its recruitment to the divisome. Together with EzrA, is a key component of the system that regulates PBP1 localization during cell cycle progression. Its main role could be the removal of PBP1 from the cell pole after pole maturation is completed. Also contributes to the recruitment of PBP1 to the division complex. Not essential for septum formation. This chain is Cell cycle protein GpsB, found in Streptococcus sanguinis (strain SK36).